The chain runs to 110 residues: uncharacterized protein (110 aa).

This is an uncharacterized protein from Autographa californica nuclear polyhedrosis virus (AcMNPV).